Here is a 1354-residue protein sequence, read N- to C-terminus: MLIALFALAHLPIFRKTPLSASSSPPPSVHRSPRCGKASTAYHPPPADACISITASAIDAASGMSNSAEQDKPIAANGNAAEPQEIEVIHFQAQEKQCCRVIRSNKTKVLTSGGVHTRGSSKVKLKNIVDYKWERKYYYPGHLVAVHRDGKHLAYAINVNNKATGMEGMVRVCNIATSMRALIKGMSGEVLDLQFAHTDCERILAVIDVSSLFVYKVDQIEGNLLCNLVLKVEDPIANYVPEYDMVSWCPYVCSSSATVPINDDDDENQLLIWSRSSQFQCFQVKMIVSEHGRGKIQPAALESGYLKIEEDSLITCAALSPDGTTVAAACADGLVRFYQIYLFDVRNHRCLHEWKPHDGKKVCSLFFLDNINKPVEESYWQHVITTSDANTEIKLWNCSLWKCLQTINVVASPSSLQPRNFIAGIDRSANYLVLSCLDSLAVYVMQIGSTGGADSENRSSDSEGEGCDTSKRIQNVAEFKLSSGILSFSIVNASMRRVKNSIESYYPIEEPDDFDDDSNSTSALVLHMFVVQAKSLQECQIIYQPCVAEKTERSSLNSKRSQTPEDNLLIKEEPESPNSGTVGAVQLDALFAKSAKRASTGSSSAMVAVAAAAAAAPSAILQDATKEAAKSESPQLSSAYTQQVNLMTPDAFSASGTAAAAAVFVSTSTTTSIGTDSSTTTSGQDRSIDSAVLQTIRMLATVTSKTSENPNAEVLLNLMNNTLIEDREQQKLKEKLDARKKFIAIDRNPERNVAENLASGSSSPSREVQEIMATQDDADAYEAELENLDDDDDDEEEELANSSPLPEAVDGTWPIVKLSSHSAELQNAAQIMSQAVQNTNNGNVPPTLGGGHNNNTSVGSNSNNNTATTLSTSNTSSSNNAGGTCVDSSGTGELNAKMELLIDLVKAQSKQINKLENEVNKLQKQQEAAAALHSKQDTSLEPKNLSQLAYKIEMQLSKLMEQYLKRYENEHKKKLTEFLAARESQNRELRDSVLQVLNQYVMNHFTDIIGNVLNMELQRQLLPRVNANMDQLQAQMQVEIVQKLSVFDKTVKENIAQVCKSKQFLDTFGKSVLIGVQTSLQTAFIESMSSTLIPAYEKSSQNMFKQLHDAFSVGIKDFMVQFNTYLQHMPQPQAGSGNTEEINNKLSMLKQLVESSLHKHRTELTDAMLETQREVKSLEILLARQVQETIRAELRKHMEAQNVAMRSQAATPAPPYDLRDSIKQLLMAGQINKAFHQALLANDLGLVEFTLRHTDSNQAFAPEGCRLEQKVLLSLIQQISADMTNHNELKQRYLNEALLAINMADPITREHAPKVLTELYRNCQQFIKNSPKNSQFSNVRLLMKAIITYRDQLK.

A disordered region spans residues 18 to 38 (PLSASSSPPPSVHRSPRCGKA). Position 32 is a phosphoserine (serine 32). 2 WD repeats span residues 309–348 (EEDSLITCAALSPDGTTVAAACADGLVRFYQIYLFDVRNH) and 363–406 (CSLF…CLQT). The disordered stretch occupies residues 552–581 (ERSSLNSKRSQTPEDNLLIKEEPESPNSGT). The span at 554 to 565 (SSLNSKRSQTPE) shows a compositional bias: polar residues. Residue serine 561 is modified to Phosphoserine. Phosphothreonine is present on threonine 563. The residue at position 576 (serine 576) is a Phosphoserine. Position 581 is a phosphothreonine (threonine 581). Phosphoserine occurs at positions 759, 762, and 763. The stretch at 765–803 (SREVQEIMATQDDADAYEAELENLDDDDDDEEEELANSS) forms a coiled coil. Residues 788 to 799 (LDDDDDDEEEEL) are compositionally biased toward acidic residues. Disordered stretches follow at residues 788-811 (LDDDDDDEEEELANSSPLPEAVDG) and 838-884 (NTNN…AGGT). Positions 853 to 884 (NNNTSVGSNSNNNTATTLSTSNTSSSNNAGGT) are enriched in low complexity. 3 coiled-coil regions span residues 893–936 (ELNA…HSKQ), 969–1036 (NEHK…QAQM), and 1159–1188 (KHRTELTDAMLETQREVKSLEILLARQVQE). Residue serine 1207 is modified to Phosphoserine. Residues threonine 1211 and threonine 1317 each carry the phosphothreonine modification. Residue tyrosine 1320 is modified to Phosphotyrosine.

Belongs to the WD repeat EDC4 family. In terms of assembly, homodimer. Interacts with Dcp1 and Dcp2. Interacts with Gyf.

It is found in the cytoplasm. It localises to the P-body. Functionally, in the process of mRNA degradation, seems to play a role in mRNA decapping. Required for silencing a subset of endogenous miRNA targets. The chain is Enhancer of mRNA-decapping protein 4 homolog (Ge-1) from Drosophila melanogaster (Fruit fly).